The following is a 516-amino-acid chain: Acyl-lipid (7-3)-desaturase, chloroplastic (516 aa).

The tract at residues 1–25 (MNATMQRSAVAGRTSGKVATTARAS) is disordered. Residues 1–47 (MNATMQRSAVAGRTSGKVATTARASSMARPRLPIAGRVARRSAVTVR) constitute a chloroplast transit peptide. Residues 83-148 (WTVYRGVAYD…LADFPVDAVP (66 aa)) enclose the Cytochrome b5 heme-binding domain. Residues His-100 and His-123 each contribute to the heme site. 2 helical membrane-spanning segments follow: residues 186 to 206 (GAAF…TYDA) and 209 to 229 (LTGA…QHCG). Positions 227–231 (HCGNH) match the Histidine box-1 motif. A Histidine box-2 motif is present at residues 262–267 (HQVSHH). Helical transmembrane passes span 305-325 (MWAL…QALL), 354-374 (FLLY…GGAA), 375-395 (GYLF…HNVP), and 423-443 (VLTS…GLNL). The short motif at 444 to 448 (QIEHH) is the Histidine box-3 element.

It belongs to the fatty acid desaturase type 1 family. The cofactor is Fe(2+).

Its subcellular location is the plastid. It is found in the chloroplast membrane. It carries out the reaction a (7Z,10Z,13Z,16Z,19Z)-docosapentaenoyl-containing glycerolipid + 2 Fe(II)-[cytochrome b5] + O2 + 2 H(+) = a (4Z,7Z,10Z,13Z,16Z,19Z)-docosahexaenoyl-containing glycerolipid + 2 Fe(III)-[cytochrome b5] + 2 H2O. The enzyme catalyses a (7Z,10Z,13Z,16Z)-docosatetraenoyl-containing glycerolipid + 2 Fe(II)-[cytochrome b5] + O2 + 2 H(+) = a (4Z,7Z,10Z,13Z,16Z)-docosapentaenoyl-containing glycerolipid + 2 Fe(III)-[cytochrome b5] + 2 H2O. Functionally, fatty acid desaturase that introduces a cis double bond at the 4-position in 16-carbon polyunsaturated fatty acids that contain a Delta(7) double bond, resulting in the production of 16 carbon fatty acid (7Z,10Z,13Z)-hexadeca-7,10,13-trienoate. The protein is Acyl-lipid (7-3)-desaturase, chloroplastic of Chlamydomonas reinhardtii (Chlamydomonas smithii).